The chain runs to 346 residues: Phenylalanine--tRNA ligase alpha subunit (346 aa).

Glu262 provides a ligand contact to Mg(2+).

It belongs to the class-II aminoacyl-tRNA synthetase family. Phe-tRNA synthetase alpha subunit type 1 subfamily. In terms of assembly, tetramer of two alpha and two beta subunits. It depends on Mg(2+) as a cofactor.

It localises to the cytoplasm. The catalysed reaction is tRNA(Phe) + L-phenylalanine + ATP = L-phenylalanyl-tRNA(Phe) + AMP + diphosphate + H(+). The protein is Phenylalanine--tRNA ligase alpha subunit of Ehrlichia chaffeensis (strain ATCC CRL-10679 / Arkansas).